Reading from the N-terminus, the 417-residue chain is NADH-quinone oxidoreductase subunit D (417 aa).

Belongs to the complex I 49 kDa subunit family. NDH-1 is composed of 14 different subunits. Subunits NuoB, C, D, E, F, and G constitute the peripheral sector of the complex.

The protein localises to the cell inner membrane. The enzyme catalyses a quinone + NADH + 5 H(+)(in) = a quinol + NAD(+) + 4 H(+)(out). Its function is as follows. NDH-1 shuttles electrons from NADH, via FMN and iron-sulfur (Fe-S) centers, to quinones in the respiratory chain. The immediate electron acceptor for the enzyme in this species is believed to be ubiquinone. Couples the redox reaction to proton translocation (for every two electrons transferred, four hydrogen ions are translocated across the cytoplasmic membrane), and thus conserves the redox energy in a proton gradient. The chain is NADH-quinone oxidoreductase subunit D from Burkholderia orbicola (strain MC0-3).